We begin with the raw amino-acid sequence, 410 residues long: Elongation factor Tu (410 aa).

The region spanning 10 to 214 is the tr-type G domain; sequence KPHVNIGTIG…EVDAYIPTPE (205 aa). The segment at 19–26 is G1; that stretch reads GHVDHGKT. Residue 19-26 coordinates GTP; that stretch reads GHVDHGKT. Threonine 26 lines the Mg(2+) pocket. Residues 60–64 form a G2 region; the sequence is GITIN. Residues 81–84 form a G3 region; it reads DCPG. GTP-binding positions include 81 to 85 and 136 to 139; these read DCPGH and NKED. The interval 136-139 is G4; it reads NKED. The G5 stretch occupies residues 174–176; sequence SAL.

Belongs to the TRAFAC class translation factor GTPase superfamily. Classic translation factor GTPase family. EF-Tu/EF-1A subfamily. Monomer.

The protein resides in the cytoplasm. The catalysed reaction is GTP + H2O = GDP + phosphate + H(+). GTP hydrolase that promotes the GTP-dependent binding of aminoacyl-tRNA to the A-site of ribosomes during protein biosynthesis. The protein is Elongation factor Tu of Gloeothece citriformis (strain PCC 7424) (Cyanothece sp. (strain PCC 7424)).